A 380-amino-acid chain; its full sequence is Oocyte-specific homeobox protein 4 (380 aa).

5 disordered regions span residues 1–25 (MSKDSSLHPKYQMASNIPRETSFLV), 43–95 (VTPT…RKCR), 152–182 (KSSQLPRRIGSGPHYRPTSSSGGEVPDFAAS), 234–303 (PRQK…CQTP), and 339–380 (TRSK…SSAY). Residues 43–53 (VTPTRPLQSSH) show a composition bias toward polar residues. Residues 54 to 67 (SVHERDLHQKDSQE) show a composition bias toward basic and acidic residues. The segment at residues 94–153 (CRKERTVYSKEQKCLLQEHFHQCQNPDLEQRKALALLIGVTEYKIQTWFKNRRAKECRKS) is a DNA-binding region (homeobox). Positions 234 to 250 (PRQKCRELSREPGHLSS) are enriched in basic and acidic residues. Residues 260–271 (SSPSPAAGAESS) are compositionally biased toward low complexity. Polar residues-rich tracts occupy residues 278–302 (LSLSPQLGPPSMTQNSESTFSMCQT) and 351–380 (NTVQNLMHGQDSCEITESPKGTVSLPSSAY).

It belongs to the paired homeobox family. Obox subfamily. As to expression, specifically expressed in early embryos.

The protein localises to the nucleus. Functionally, transcription factor required for zygotic genome activation (ZGA), a critical event in early embryonic development during which the developmental control passes from maternally provided mRNAs to the expression of the zygotic genome after fertilization. Cannot compensate for loss of other members of the Obox family, suggesting that its function differs from other Obox family members. May regulate expression of histone genes in embryonic stem cells. Also involved in completion of meiosis of oocytes during the meiosis-I/meiosis-II transition. Required to maintain the nuclear membrane of the germinal vesicle in oocytes. The polypeptide is Oocyte-specific homeobox protein 4 (Mus musculus (Mouse)).